Here is a 108-residue protein sequence, read N- to C-terminus: Heme oxygenase (staphylobilin-producing) 2 (108 aa).

Residues 2 to 93 (FMAENRLQLQ…DDDGQQSPIL (92 aa)) form the ABM domain. Fe cation is bound at residue Asn-6. Heme-binding positions include 21–28 (RFYNRQGI) and His-76.

It belongs to the antibiotic biosynthesis monooxygenase family. Heme-degrading monooxygenase IsdG subfamily. In terms of assembly, homodimer.

The protein localises to the cytoplasm. It catalyses the reaction heme b + 5 AH2 + 4 O2 + 2 H(+) = delta-staphylobilin + Fe(2+) + formaldehyde + 5 A + 4 H2O. The enzyme catalyses heme b + 5 AH2 + 4 O2 + 2 H(+) = beta-staphylobilin + Fe(2+) + formaldehyde + 5 A + 4 H2O. Functionally, allows bacterial pathogens to use the host heme as an iron source. Catalyzes the oxidative degradation of the heme macrocyclic porphyrin ring to the oxo-bilirubin chromophore staphylobilin (a mixture of the linear tetrapyrroles 5-oxo-delta-bilirubin and 15-oxo-beta-bilirubin) in the presence of a suitable electron donor such as ascorbate or NADPH--cytochrome P450 reductase, with subsequent release of free iron. The sequence is that of Heme oxygenase (staphylobilin-producing) 2 (isdI) from Staphylococcus aureus (strain MRSA252).